A 228-amino-acid chain; its full sequence is 7-cyano-7-deazaguanine synthase (228 aa).

Residue 10–20 (FSGGQDSTTLA) participates in ATP binding. Zn(2+)-binding residues include Cys190, Cys205, Cys208, and Cys211.

It belongs to the QueC family. Zn(2+) serves as cofactor.

The enzyme catalyses 7-carboxy-7-deazaguanine + NH4(+) + ATP = 7-cyano-7-deazaguanine + ADP + phosphate + H2O + H(+). The protein operates within purine metabolism; 7-cyano-7-deazaguanine biosynthesis. Its function is as follows. Catalyzes the ATP-dependent conversion of 7-carboxy-7-deazaguanine (CDG) to 7-cyano-7-deazaguanine (preQ(0)). The chain is 7-cyano-7-deazaguanine synthase from Helicobacter pylori (strain P12).